We begin with the raw amino-acid sequence, 82 residues long: Ice-structuring protein B (82 aa).

An N-terminal signal peptide occupies residues 1-23 (MALSLFTVGQLIFLFWTMRITEA). The propeptide at 24–44 (RPDPAAKAAPAAAAVPAAAAP) is removed by a dipeptidylpeptidase. R81 carries the arginine amide modification.

This sequence belongs to the type-I AFP family. In terms of processing, amidated. Detected in liver (at protein level).

It is found in the secreted. It localises to the extracellular space. Contributes to protect fish blood from freezing at subzero sea water temperatures. Lowers the blood freezing point. Binds to nascent ice crystals and prevents further growth. The protein is Ice-structuring protein B of Pseudopleuronectes americanus (Winter flounder).